We begin with the raw amino-acid sequence, 186 residues long: Peptidoglycan-recognition protein SD (186 aa).

An N-terminal signal peptide occupies residues 1–18 (MTWIGLLIVGLTAIAVQG). One can recognise an N-acetylmuramoyl-L-alanine amidase domain in the interval 47–169 (AVIAHTAGGA…RQVSATKSPG (123 aa)). A disulfide bridge connects residues Cys57 and Cys63. Residue Asn181 is glycosylated (N-linked (GlcNAc...) asparagine).

It belongs to the N-acetylmuramoyl-L-alanine amidase 2 family. In larvae, it is mainly expressed in fat body. Also expressed in uninduced hemocytes and mbn-2 cells.

The protein resides in the secreted. In terms of biological role, peptidoglycan-recognition protein that plays a key role in innate immunity by binding to peptidoglycans (PGN) of Gram-positive bacteria and activating the Toll pathway. Has no activity against on Gram-negative bacteria and fungi. Shows some partial redundancy with PRPGP-SA in Gram-positive bacteria recognition. May act by activating the proteolytic cleavage of Spatzle and the subsequent activation of Toll pathway. Recognizes S.aureus PGN. This Drosophila melanogaster (Fruit fly) protein is Peptidoglycan-recognition protein SD (PGRP-SD).